A 500-amino-acid polypeptide reads, in one-letter code: Lysine--tRNA ligase (500 aa).

Mg(2+) is bound by residues Glu410 and Glu417.

The protein belongs to the class-II aminoacyl-tRNA synthetase family. Homodimer. Mg(2+) serves as cofactor.

The protein localises to the cytoplasm. It catalyses the reaction tRNA(Lys) + L-lysine + ATP = L-lysyl-tRNA(Lys) + AMP + diphosphate. This chain is Lysine--tRNA ligase, found in Pseudomonas putida (strain ATCC 700007 / DSM 6899 / JCM 31910 / BCRC 17059 / LMG 24140 / F1).